Reading from the N-terminus, the 888-residue chain is Valine--tRNA ligase (888 aa).

The 'HIGH' region signature appears at 43–53 (PFTSGTLHLGH). A 'KMSKS' region motif is present at residues 534–538 (KMSKS). Position 537 (lysine 537) interacts with ATP.

This sequence belongs to the class-I aminoacyl-tRNA synthetase family. ValS type 2 subfamily.

It localises to the cytoplasm. The enzyme catalyses tRNA(Val) + L-valine + ATP = L-valyl-tRNA(Val) + AMP + diphosphate. In terms of biological role, catalyzes the attachment of valine to tRNA(Val). As ValRS can inadvertently accommodate and process structurally similar amino acids such as threonine, to avoid such errors, it has a 'posttransfer' editing activity that hydrolyzes mischarged Thr-tRNA(Val) in a tRNA-dependent manner. This chain is Valine--tRNA ligase, found in Thermococcus kodakarensis (strain ATCC BAA-918 / JCM 12380 / KOD1) (Pyrococcus kodakaraensis (strain KOD1)).